Reading from the N-terminus, the 464-residue chain is Serine/threonine-protein kinase 38-like (464 aa).

Alanine 2 carries the post-translational modification N-acetylalanine. The tract at residues 64-89 (KLRRSQHARKETEFLRLKRTRLGLDD) is S100B binding. Threonine 75 is subject to Phosphothreonine. The 294-residue stretch at 90 to 383 (FESLKVIGRG…VEEIKGHPFF (294 aa)) folds into the Protein kinase domain. Residues 96–104 (IGRGAFGEV) and lysine 119 contribute to the ATP site. The active-site Proton acceptor is aspartate 213. Serine 282 is subject to Phosphoserine; by autocatalysis. Residues 384–453 (EGVDWGHIRE…KRFEGLTQRG (70 aa)) form the AGC-kinase C-terminal domain. Threonine 442 bears the Phosphothreonine; by STK24/MST3 mark.

Belongs to the protein kinase superfamily. AGC Ser/Thr protein kinase family. In terms of assembly, homodimeric S100B binds two molecules of STK38L. Interacts with MOB1 and MOB2. Interacts with MICAL1; leading to inhibit the protein kinase activity by antagonizing activation by MST1/STK4. Mg(2+) serves as cofactor. As to expression, highly expressed in the large and small intestine, stomach and testis. High levels also present in the brain, in particular the neurocortex, basal forebrain, hippocampus, the amygdala, cerebellum and brainstem.

Its subcellular location is the cytoplasm. It localises to the cytoskeleton. The protein localises to the membrane. It carries out the reaction L-seryl-[protein] + ATP = O-phospho-L-seryl-[protein] + ADP + H(+). The enzyme catalyses L-threonyl-[protein] + ATP = O-phospho-L-threonyl-[protein] + ADP + H(+). With respect to regulation, activated by binding of S100B which releases autoinhibitory N-lobe interactions, enabling ATP to bind and the autophosphorylation of Ser-282. Thr-442 then undergoes calcium-dependent phosphorylation by STK24/MST3. Interactions between phosphorylated Thr-442 and the N-lobe promote additional structural changes that complete the activation of the kinase. Autoinhibition is also released by the binding of MOB1/MOBKL1A and MOB2 to the N-terminal of STK38L. Functionally, involved in the regulation of structural processes in differentiating and mature neuronal cells. The chain is Serine/threonine-protein kinase 38-like from Mus musculus (Mouse).